A 596-amino-acid polypeptide reads, in one-letter code: V-type ATP synthase alpha chain (596 aa).

233–240 is a binding site for ATP; the sequence is GPFGAGKT.

Belongs to the ATPase alpha/beta chains family.

It carries out the reaction ATP + H2O + 4 H(+)(in) = ADP + phosphate + 5 H(+)(out). Functionally, produces ATP from ADP in the presence of a proton gradient across the membrane. The V-type alpha chain is a catalytic subunit. The chain is V-type ATP synthase alpha chain from Streptococcus sanguinis (strain SK36).